A 237-amino-acid chain; its full sequence is Ribosomal RNA small subunit methyltransferase G (237 aa).

S-adenosyl-L-methionine-binding positions include glycine 78, phenylalanine 83, 129 to 130 (AE), and arginine 148. The tract at residues 218–237 (KKETPRKYPRKAGTPNKKPL) is disordered.

Belongs to the methyltransferase superfamily. RNA methyltransferase RsmG family.

The protein resides in the cytoplasm. In terms of biological role, specifically methylates the N7 position of a guanine in 16S rRNA. This chain is Ribosomal RNA small subunit methyltransferase G, found in Streptococcus uberis (strain ATCC BAA-854 / 0140J).